The following is a 170-amino-acid chain: Ureidoglycolate lyase (170 aa).

Belongs to the ureidoglycolate lyase family. As to quaternary structure, homodimer. Ni(2+) is required as a cofactor.

It carries out the reaction (S)-ureidoglycolate = urea + glyoxylate. Its pathway is nitrogen metabolism; (S)-allantoin degradation. Catalyzes the catabolism of the allantoin degradation intermediate (S)-ureidoglycolate, generating urea and glyoxylate. Involved in the utilization of allantoin as nitrogen source. The sequence is that of Ureidoglycolate lyase from Pseudomonas syringae pv. tomato (strain ATCC BAA-871 / DC3000).